The sequence spans 361 residues: Chorismate synthase (361 aa).

Arginine 47 provides a ligand contact to NADP(+). FMN is bound by residues arginine 124–serine 126, glycine 286, lysine 301–threonine 305, and arginine 327.

The protein belongs to the chorismate synthase family. In terms of assembly, homotetramer. Requires FMNH2 as cofactor.

It carries out the reaction 5-O-(1-carboxyvinyl)-3-phosphoshikimate = chorismate + phosphate. Its pathway is metabolic intermediate biosynthesis; chorismate biosynthesis; chorismate from D-erythrose 4-phosphate and phosphoenolpyruvate: step 7/7. Catalyzes the anti-1,4-elimination of the C-3 phosphate and the C-6 proR hydrogen from 5-enolpyruvylshikimate-3-phosphate (EPSP) to yield chorismate, which is the branch point compound that serves as the starting substrate for the three terminal pathways of aromatic amino acid biosynthesis. This reaction introduces a second double bond into the aromatic ring system. The polypeptide is Chorismate synthase (Prochlorococcus marinus (strain NATL2A)).